The following is a 466-amino-acid chain: 23S rRNA (uracil(1939)-C(5))-methyltransferase RlmD (466 aa).

Residues 1–54 form the TRAM domain; it reads MVDVLNIESLDLEARGIAHRDGKVLFVEGALPGERVTVQTVRRKPSYEIAKVEE. [4Fe-4S] cluster-binding residues include Cys67, Cys73, Cys76, and Cys155. Residues Gln264, Phe293, Asn298, Glu314, Asn342, and Asp363 each coordinate S-adenosyl-L-methionine. Residue Cys393 is the Nucleophile of the active site.

This sequence belongs to the class I-like SAM-binding methyltransferase superfamily. RNA M5U methyltransferase family. RlmD subfamily.

It catalyses the reaction uridine(1939) in 23S rRNA + S-adenosyl-L-methionine = 5-methyluridine(1939) in 23S rRNA + S-adenosyl-L-homocysteine + H(+). In terms of biological role, catalyzes the formation of 5-methyl-uridine at position 1939 (m5U1939) in 23S rRNA. This Bordetella bronchiseptica (strain ATCC BAA-588 / NCTC 13252 / RB50) (Alcaligenes bronchisepticus) protein is 23S rRNA (uracil(1939)-C(5))-methyltransferase RlmD.